Here is a 355-residue protein sequence, read N- to C-terminus: Protein RecA (355 aa).

An ATP-binding site is contributed by 72–79 (GPESSGKT).

This sequence belongs to the RecA family.

It is found in the cytoplasm. In terms of biological role, can catalyze the hydrolysis of ATP in the presence of single-stranded DNA, the ATP-dependent uptake of single-stranded DNA by duplex DNA, and the ATP-dependent hybridization of homologous single-stranded DNAs. It interacts with LexA causing its activation and leading to its autocatalytic cleavage. The polypeptide is Protein RecA (Wolbachia pipientis subsp. Culex pipiens (strain wPip)).